Reading from the N-terminus, the 619-residue chain is Chaperone protein HscA homolog (619 aa).

The protein belongs to the heat shock protein 70 family.

Its function is as follows. Chaperone involved in the maturation of iron-sulfur cluster-containing proteins. Has a low intrinsic ATPase activity which is markedly stimulated by HscB. The polypeptide is Chaperone protein HscA homolog (Acinetobacter baumannii (strain ACICU)).